The sequence spans 2458 residues: MNLPGEIHHRFTYMYIAQVSFADLDITKHNLPISTMSSSDSPNYGDATMPIAIVGMAARFSGEATNPSKLWDMMVQGRTGHSAVPENRFDAEAWHHPSHERRGTIQPRSGFFLREDPAVFDAPFFSMTAKEAAGMDPMQRKLLEISYEAFENAGIPITKLPGTATGVYSGVMTNDYELMTAGDPMQLPQNAASGTSRAMLANRISWFYDLRGPSFALDTACSSSLYALHLACQSLQAGETDQALVTGVNLILAPNFISQLSSMHMLSPDGKSHSFDSRANGYARGEALAAVVVKPLYQALADGDTIRAVIRGSGANQDGKTVGITIPNPQAQAELIRKTYATAGLGLEQTGYFEAHGTGTPVGDPIELSAIGTSFGEHRSQNCPLFVGSVKTNVGHTEGAAGLAGVVKTVLALEAGIIPPLADFQELNEKLRLEEWKLALPLKATPWPMPGLRRASVNSFGFGGANAHVILDDAYHYLKSHGLSANHHTTLSESEDSSDSGLEMDSSTSDSGEGQSSKLLLFSAYDGAGIKRTEASWNSHLADILADSKTVDETMGMNDLAYTLSDRRTTFDFRSFAVASSVQDLKAKLENDGLPRLNRASRRSNPVFVFTGQGAQWPAMGRELLSNPIFRASIERSKAVLELEGCEWDVVQVLSDPQDQRIHIPAFSQPVCTILQVALVDLLQSWGIQPAATVGHSSGEVAAAYAAKMISQDEAVRIGYWRGFYSEQVKARLENIRGSMMAVGLSESQATSYLNRVPEGSVVVACINSPSSVTLSGEDHSIKTLEAILQADGHFARKLRVEVAYHSPHMKTVADEFLNAVGIITPQPSEIPMFSSVTETRVEDPATLVASYWMQNLISPVRFSGALATLLNDTPSVKANTRRRRTAGIVWSALIEVGPHEALKGPCRQIMSGLNTKLADQIPYMSVLSRGKSAVETSLTAAGLLWASGHPINIREVNQYRDTGERVITDLPPYPWNHEKGFWHEPAASISARLRKEPRNDLLGVPVAQQNPFERCWQNYLSVSECPWQKDHVITGTVLYPGAGHLIMAFEAAIRLAADNRPLKGVSFSDVHFDKGLVIPSDDHGVETRLCTRPHESLLDWYHYTLYSINATGDWTKHSWGSFSLHYEDAVSVQQAKRSKGEYDDINTRACRKLDVESFYEQLLSIGTEYGPTFRNLVHAAAAPGYHSGVGTITIPDTKSVMPHEFEYPHLIHPATLDAIFHLIFVAMGEGNALSESAIPTRVDRIYISTDLPRGVGAKYTGYGRAEPVSSRDTLGTIVVSDENWSAGPKIIVEGMTVTEVSAGASTSFNSLLIPGGQGRIATLEWKEDVDSLVGPTAESWLAQKGPSIGGQASDVTEAVQRLDAWLELSCFKSTDLGTLVICPSKLKGSFELVKKYGSKHGERYRFGRTTIIEFSENDISAAESAFAPHGIESSYAAIDLSATPEHAMEQLGMFDLIIAEENVIVQFPDVTKILHREGRVAIIRSHALPDERHFAATKGLLKEISFESQDGSILQIAGLGLEMDPAIRSLDDVVLLQHVDASPAAKNFEKRLTAQLTSLGAHVRSNTIANASSLSGNIVISLLEIDCQFVISWTSEEFEQFRQLTNARYVLWITRGGLLDADRASLDYAPSTGLLRTVRVEKPQIRLPHLDLSPSLDLNSDRAVEIVISAFHSSIKPSVKEKNLEMEYAESNGLLYIPRARGHAALDHELALRGEKVSSIPGPLSAPGIARRLETSLAGSPSQARWVPDETVGDKLADFDVEIQVSHVGLEHSKVENYLNGKQLSLAPGLGRVAVGTLTRAGAKVSRFIPGDQVFALHAAPFHTHLRVTEDAVHAVPDILSPAQAAHLPLAAARAWHSLIDVAAFRAGQSVFVNGASDTVGRLTVELARLLKGDVFASVSSDDEKHTLTKTYNIPEDHIFSLSHRTDWASDLKAAMGQGQLDIVINNATPSPAIRSLFQSIAPKGRFVDLTQRLDPSLLDPRMFQRNVTLSLVDWESLTNPQLGALMVRSLDLLRAGALTPIKEEYIFSVSDLPEALLSVGQQQHERVAAPVVVEFSADATVPLLPSLPAPLHLKPDATYILAGGLGALGLTIAENMCSHGAGHLVFLSRSGASSQRQQEALESFRARGCKVDVVKCDVTDQEQVQALATQIREQSWNVRGIIQLAMVLRDSIFENMTFDKWETAVNPKIKGTWNLHAELPKDVDFFIILSSLSGIIGNTAQANYCAGNTYEDALAHYRRKQGLAATTLNVGLVTDASHFNENSTIEDYLRKYSHWIAAQVTDSELQHTITAVMRRTVGDKNEPVPDQLLVGLSDNVRRDGNSLNLWPQDRKFDHRISLEDGLGVVEKDTNQQKLKASTTVAQAHEVVETALRLNVAAAMTASPDDIDIEKPLYAFGIDSLKGIEVRNWIFSELQADVSVFEVLSPMTLSRLALKIVSKSTLVGAELAAEAAADSVA.

The Ketosynthase family 3 (KS3) domain occupies 48–473 (TMPIAIVGMA…GANAHVILDD (426 aa)). Residues C221, H356, and H396 each act as for beta-ketoacyl synthase activity in the active site. Positions 488-515 (HTTLSESEDSSDSGLEMDSSTSDSGEGQ) are disordered. A compositionally biased stretch (low complexity) spans 499-515 (DSGLEMDSSTSDSGEGQ). The tract at residues 609–932 (VFTGQGAQWP…PYMSVLSRGK (324 aa)) is malonyl-CoA:ACP transacylase (MAT) domain. Residue S697 is the For malonyltransferase activity of the active site. Residues 1000–1130 (NDLLGVPVAQ…GSFSLHYEDA (131 aa)) are N-terminal hotdog fold. Positions 1000-1307 (NDLLGVPVAQ…VTEVSAGAST (308 aa)) constitute a PKS/mFAS DH domain. The segment at 1001–1305 (DLLGVPVAQQ…MTVTEVSAGA (305 aa)) is dehydratase (DH) domain. Catalysis depends on H1032, which acts as the Proton acceptor; for dehydratase activity. Residues 1148–1307 (TRACRKLDVE…VTEVSAGAST (160 aa)) are C-terminal hotdog fold. Catalysis depends on D1218, which acts as the Proton donor; for dehydratase activity. The enoylreductase (ER) domain stretch occupies residues 1740 to 2051 (GSPSQARWVP…GQQQHERVAA (312 aa)). Residues 2076–2264 (KPDATYILAG…VTDASHFNEN (189 aa)) are ketoreductase (KR) domain. The 83-residue stretch at 2359 to 2441 (STTVAQAHEV…RLALKIVSKS (83 aa)) folds into the Carrier domain. Position 2401 is an O-(pantetheine 4'-phosphoryl)serine (S2401).

It functions in the pathway polyketide biosynthesis. Its function is as follows. Highly reducing polyketide synthase; part of the gene cluster that mediates the biosynthesis of asperlin, a polyketide showing anti-inflammatory, antitumor and antibiotic activities. The first step of the asperlin biosynthesis is the production of the intermediate 2,4,6-octatrienoic acid by the highly redusing polyketide synthase alnA with cleavage of the PKS product by the esterase alnB. 2,4,6-octatrienoic acid is further converted to asperlin via several steps involving the remaining enzymes from the cluster. This Emericella nidulans (strain FGSC A4 / ATCC 38163 / CBS 112.46 / NRRL 194 / M139) (Aspergillus nidulans) protein is Highly reducing polyketide synthase alnA.